Consider the following 384-residue polypeptide: tRNA-specific 2-thiouridylase MnmA (384 aa).

ATP is bound by residues 18-25 (AMSGGVDS) and leucine 44. Cysteine 112 functions as the Nucleophile in the catalytic mechanism. An intrachain disulfide couples cysteine 112 to cysteine 209. Glycine 136 contacts ATP. The interaction with tRNA stretch occupies residues 159–161 (RDQ). The Cysteine persulfide intermediate role is filled by cysteine 209.

It belongs to the MnmA/TRMU family.

The protein localises to the cytoplasm. The catalysed reaction is S-sulfanyl-L-cysteinyl-[protein] + uridine(34) in tRNA + AH2 + ATP = 2-thiouridine(34) in tRNA + L-cysteinyl-[protein] + A + AMP + diphosphate + H(+). Functionally, catalyzes the 2-thiolation of uridine at the wobble position (U34) of tRNA, leading to the formation of s(2)U34. The protein is tRNA-specific 2-thiouridylase MnmA of Methylobacterium radiotolerans (strain ATCC 27329 / DSM 1819 / JCM 2831 / NBRC 15690 / NCIMB 10815 / 0-1).